The chain runs to 117 residues: Large ribosomal subunit protein uL18 (117 aa).

The protein belongs to the universal ribosomal protein uL18 family. As to quaternary structure, part of the 50S ribosomal subunit; part of the 5S rRNA/L5/L18/L25 subcomplex. Contacts the 5S and 23S rRNAs.

Its function is as follows. This is one of the proteins that bind and probably mediate the attachment of the 5S RNA into the large ribosomal subunit, where it forms part of the central protuberance. This is Large ribosomal subunit protein uL18 from Actinobacillus succinogenes (strain ATCC 55618 / DSM 22257 / CCUG 43843 / 130Z).